We begin with the raw amino-acid sequence, 436 residues long: Adenosylhomocysteinase (436 aa).

T62, D136, and E161 together coordinate substrate. 162-164 (TTT) is an NAD(+) binding site. Substrate-binding residues include K191 and D195. Residues N196, 225-230 (GFGDVG), E248, N283, 304-306 (IGH), and N352 contribute to the NAD(+) site.

Belongs to the adenosylhomocysteinase family. Requires NAD(+) as cofactor.

Its subcellular location is the cytoplasm. The catalysed reaction is S-adenosyl-L-homocysteine + H2O = L-homocysteine + adenosine. It participates in amino-acid biosynthesis; L-homocysteine biosynthesis; L-homocysteine from S-adenosyl-L-homocysteine: step 1/1. May play a key role in the regulation of the intracellular concentration of adenosylhomocysteine. In Leptospira interrogans serogroup Icterohaemorrhagiae serovar copenhageni (strain Fiocruz L1-130), this protein is Adenosylhomocysteinase.